The following is a 358-amino-acid chain: Snurportin-1 (358 aa).

Met1 is modified (N-acetylmethionine). 2 disordered regions span residues Met1 to Glu39 and Asp69 to Leu89. The necessary for interaction with KPNB1 and m3G-cap U1 and U5 snRNP import receptor activity stretch occupies residues Met1–Leu65. Residues Met1–Gly160 form a necessary for interaction with XPO1 region. 2 stretches are compositionally biased toward polar residues: residues Ala7 to Ala22 and Gln30 to Glu39. Positions Ser11–Met73 constitute an IBB domain. Ser75 is subject to Phosphoserine. The interval Gly128 to Arg130 is interaction with m3G-cap structure. Positions Met210 to Ala329 are necessary for binding to the m3G-cap structure. The span at Lys315–Ser341 shows a compositional bias: basic and acidic residues. The segment at Lys315–Ser358 is disordered. Positions Pro349–Ser358 are enriched in polar residues. At Ser351 the chain carries Phosphoserine.

It belongs to the snurportin family. In terms of assembly, component of an import snRNP complex composed of KPNB1, SNUPN, SMN1 and ZNF259. Component of a nuclear export receptor complex composed of KPNB1, Ran, SNUPN and XPO1. Found in a trimeric export complex with SNUPN, Ran and XPO1. Interacts (via IBB domain) with KPNB1; the interaction is direct. Interacts with DDX20, IPO7, SMN1, SNRPB and XPO1. Interacts directly with XPO1. Its interaction with XPO1 and binding to m3G-cap U snRNPs appears to be mutually exclusive. Can form homomers.

It is found in the nucleus. It localises to the cytoplasm. Functionally, functions as an U snRNP-specific nuclear import adapter. Involved in the trimethylguanosine (m3G)-cap-dependent nuclear import of U snRNPs. Binds specifically to the terminal m3G-cap U snRNAs. This Rattus norvegicus (Rat) protein is Snurportin-1 (Snupn).